The following is a 546-amino-acid chain: CTP synthase (546 aa).

Residues Met-1–Leu-266 are amidoligase domain. Ser-14 is a CTP binding site. Ser-14 lines the UTP pocket. Residues Ser-15–Ile-20 and Asp-72 each bind ATP. Mg(2+) is bound by residues Asp-72 and Glu-140. CTP contacts are provided by residues Asp-147–Glu-149, Lys-187–Gln-192, and Lys-223. UTP-binding positions include Lys-187–Gln-192 and Lys-223. Residue Lys-239 to Val-241 coordinates ATP. In terms of domain architecture, Glutamine amidotransferase type-1 spans Val-291–Arg-542. Residue Gly-352 coordinates L-glutamine. Cys-379 acts as the Nucleophile; for glutamine hydrolysis in catalysis. L-glutamine contacts are provided by residues Leu-380–Gln-383, Glu-403, and Arg-470. Active-site residues include His-515 and Glu-517.

The protein belongs to the CTP synthase family. In terms of assembly, homotetramer.

The catalysed reaction is UTP + L-glutamine + ATP + H2O = CTP + L-glutamate + ADP + phosphate + 2 H(+). It catalyses the reaction L-glutamine + H2O = L-glutamate + NH4(+). The enzyme catalyses UTP + NH4(+) + ATP = CTP + ADP + phosphate + 2 H(+). It participates in pyrimidine metabolism; CTP biosynthesis via de novo pathway; CTP from UDP: step 2/2. Allosterically activated by GTP, when glutamine is the substrate; GTP has no effect on the reaction when ammonia is the substrate. The allosteric effector GTP functions by stabilizing the protein conformation that binds the tetrahedral intermediate(s) formed during glutamine hydrolysis. Inhibited by the product CTP, via allosteric rather than competitive inhibition. Its function is as follows. Catalyzes the ATP-dependent amination of UTP to CTP with either L-glutamine or ammonia as the source of nitrogen. Regulates intracellular CTP levels through interactions with the four ribonucleotide triphosphates. The chain is CTP synthase from Shewanella sp. (strain ANA-3).